We begin with the raw amino-acid sequence, 142 residues long: Ctenidin-3 (142 aa).

Positions 1-19 are cleaved as a signal peptide; it reads MKHLIPLIVMASVVLAVYA. Position 139 is a tyrosine amide (Tyr-139).

As to expression, expressed in hemocytes (at protein level).

It is found in the secreted. Functionally, antimicrobial protein with bacteriostatic activity against the Gram-negative bacterium E.coli, and very weak activity against the Gram-positive bacterium S.aureus. Lacks activity against the yeast C.albicans. The protein is Ctenidin-3 of Cupiennius salei (American wandering spider).